We begin with the raw amino-acid sequence, 230 residues long: Phosducin-like protein 1 (230 aa).

Methionine 1 carries the post-translational modification N-acetylmethionine. Residues 16–166 form the Phosducin domain; sequence AEKDKHTTVD…VVGYKNGLEK (151 aa). Positions 25 to 79 form a coiled coil; the sequence is DSDDKSSGEENLDELLNELDRELDEDHEFLSAYRSERLQQISDHLKQVKKNVEDD. The segment at 81 to 230 is thioredoxin fold; the sequence is YGRLQCIDNE…RSESDSDLDI (150 aa).

It belongs to the phosducin family. Interacts with the G protein beta-gamma subunit complex (STE4-STE18 complex).

The protein resides in the cytoplasm. Not essential for growth. Inhibits early G-protein signaling events following pheromone stimulation. May help create heterodimerizable beta-tubulin by facilitating the efficient transfer of nascent beta-tubulin polypeptides to the folding apparatus. In Saccharomyces cerevisiae (strain ATCC 204508 / S288c) (Baker's yeast), this protein is Phosducin-like protein 1 (PLP1).